The chain runs to 412 residues: Sulfhydrogenase 2 subunit alpha (412 aa).

Ni(2+) is bound by residues cysteine 60, cysteine 63, cysteine 402, and cysteine 405. Fe cation is bound at residue cysteine 63. Cysteine 405 is a binding site for Fe cation.

This sequence belongs to the [NiFe]/[NiFeSe] hydrogenase large subunit family. As to quaternary structure, dimer of heterotetramer of alpha, beta, gamma and delta subunits. The nickel-containing alpha and delta subunits constitute the hydrogenase activity. The beta and gamma subunits (flavin-containing dimer) constitute the sulfur reductase activity. The cofactor is Ni(2+). Fe cation serves as cofactor.

The protein localises to the cytoplasm. It carries out the reaction H2 + NADP(+) = NADPH + H(+). The enzyme catalyses H2 + NAD(+) = NADH + H(+). Functionally, part of a bifunctional enzyme complex that functions as a hydrogen-evolving hydrogenase with sulfur-reducing activity. May play a role in hydrogen cycling during fermentative growth. Activity exhibited with NAD in addition to NADPH. The alpha and delta subunits form the hydrogenase component that catalyzes the reduction of protons to evolve hydrogen. In Pyrococcus furiosus (strain ATCC 43587 / DSM 3638 / JCM 8422 / Vc1), this protein is Sulfhydrogenase 2 subunit alpha.